The sequence spans 929 residues: Facilitated trehalose transporter Tret1 (929 aa).

The segment at 1–275 (MSGRDNRAAG…VGYQQQKATS (275 aa)) is disordered. At 1–462 (MSGRDNRAAG…LEVYRPTTNP (462 aa)) the chain is on the cytoplasmic side. The span at 10–26 (GAGGGSGGGGGGGGGGG) shows a compositional bias: gly residues. Positions 41–59 (KLKEKLTRAGEELGYHRVE) are enriched in basic and acidic residues. A compositionally biased stretch (polar residues) spans 60–72 (SNLSASNTATSLD). Low complexity-rich tracts occupy residues 85–141 (AAPQ…QPLR), 168–178 (QEIQQQQLQQQ), and 237–254 (SNSN…VAAD). Phosphoserine is present on residues serine 320, serine 321, and serine 322. The segment at 352–371 (VLHGSSTDSDEEGEDAEHKR) is disordered. Phosphoserine occurs at positions 392 and 394. The interval 398 to 420 (FLSSRQNFQQQRSISTDSRKSRR) is disordered. Polar residues predominate over residues 402–413 (RQNFQQQRSIST). Residues 463 to 483 (IYIWTQVLAALSVSLGSLVVG) traverse the membrane as a helical segment. Residues 484–512 (FSSAYTSPALVSMTDRNLTSFDVSTEDAS) lie on the Extracellular side of the membrane. A glycan (N-linked (GlcNAc...) asparagine) is linked at asparagine 500. A helical membrane pass occupies residues 513 to 533 (WVGGIMPLAGLAGGIAGGPLI). At 534–541 (EYLGRRNT) the chain is on the cytoplasmic side. Residues 542–562 (ILATAVPFIISWLLIACAVNV) traverse the membrane as a helical segment. The Extracellular segment spans residues 563–569 (PMVLSGR). Residues 570-590 (FLAGFCVGIASLSLPVYLGET) form a helical membrane-spanning segment. Over 591 to 596 (VQPEVR) the chain is Cytoplasmic. Residues 597-617 (GTLGLLPTAFGNIGILLCFIA) form a helical membrane-spanning segment. Residues 618–624 (GTYMDWS) are Extracellular-facing. Residues 625–645 (MLAFLGGALPVPFLILMFLIP) form a helical membrane-spanning segment. Topologically, residues 646–708 (ETPRWYVSRG…ELLKRSNLKP (63 aa)) are cytoplasmic. A helical transmembrane segment spans residues 709–729 (LSISLGLMFFQQLSGINAVIF). Topologically, residues 730–745 (YTVQIFKDAGSTLDGN) are extracellular. The helical transmembrane segment at 746–766 (VCTIIVGTVNFIATFIGILLI) threads the bilayer. Topologically, residues 767-772 (DRAGRK) are cytoplasmic. A helical transmembrane segment spans residues 773–793 (ILLYVSNIAMILTLFVLGGFF). Residues 794-804 (YCKANGMDVSN) are Extracellular-facing. The helical transmembrane segment at 805–825 (VGLLPLCCFVVYILGFSLGFG) threads the bilayer. Topologically, residues 826–839 (PIPWLMMGEILPAK) are cytoplasmic. The helical transmembrane segment at 840–860 (IRGSAASVATAFNWTCTFVVT) threads the bilayer. Residues 861–873 (KSFLDMIKLIGAH) are Extracellular-facing. Residues 874–894 (GAFWLFGVICCIGMFFVIFCV) traverse the membrane as a helical segment. The Cytoplasmic portion of the chain corresponds to 895-929 (PETQGKTLEDIERKMMGRVRRMSSVANIKPLSFNM). Phosphoserine occurs at positions 917 and 918.

Belongs to the major facilitator superfamily. Sugar transporter (TC 2.A.1.1) family. Trehalose transporter subfamily.

The protein resides in the cell membrane. In terms of biological role, low-capacity facilitative transporter for trehalose. Does not transport maltose, sucrose or lactose. Mediates the bidirectional transfer of trehalose. Responsible for the transport of trehalose synthesized in the fat body and the incorporation of trehalose into other tissues that require a carbon source, thereby regulating trehalose levels in the hemolymph. The polypeptide is Facilitated trehalose transporter Tret1 (Drosophila grimshawi (Hawaiian fruit fly)).